Reading from the N-terminus, the 112-residue chain is uncharacterized protein (112 aa).

2 consecutive transmembrane segments (helical) span residues 55 to 75 (LLEI…PTLF) and 91 to 111 (LIML…LLLL).

Its subcellular location is the membrane. This is an uncharacterized protein from Saccharomyces cerevisiae (strain ATCC 204508 / S288c) (Baker's yeast).